Here is a 440-residue protein sequence, read N- to C-terminus: GTPase Der (440 aa).

2 consecutive EngA-type G domains span residues Pro3–Arg167 and Thr176–Cys351. GTP contacts are provided by residues Gly9–Ser16, Asp56–Phe60, Asn119–Asp122, Gly182–Ser189, Asp229–Ile233, and Asn294–Asp297. Residues Lys352–Asp436 enclose the KH-like domain.

This sequence belongs to the TRAFAC class TrmE-Era-EngA-EngB-Septin-like GTPase superfamily. EngA (Der) GTPase family. In terms of assembly, associates with the 50S ribosomal subunit.

Functionally, GTPase that plays an essential role in the late steps of ribosome biogenesis. The sequence is that of GTPase Der from Geobacter sp. (strain M21).